Here is a 66-residue protein sequence, read N- to C-terminus: UPF0337 protein BP1738 (66 aa).

It belongs to the UPF0337 (CsbD) family.

The polypeptide is UPF0337 protein BP1738 (Bordetella pertussis (strain Tohama I / ATCC BAA-589 / NCTC 13251)).